A 103-amino-acid polypeptide reads, in one-letter code: uncharacterized protein (103 aa).

The next 3 helical transmembrane spans lie at 12–34 (GFSW…LTIS), 49–66 (TLMS…ALIA), and 79–101 (FARG…VAGG).

It is found in the cell membrane. This is an uncharacterized protein from Pasteurella multocida (strain Pm70).